Reading from the N-terminus, the 146-residue chain is Hemoglobin subunit delta (146 aa).

In terms of domain architecture, Globin spans 2–146 (HLTGEEKSAV…VATALAHKYH (145 aa)). Positions 63 and 92 each coordinate heme b.

Belongs to the globin family. As to quaternary structure, heterotetramer of two delta chains and two alpha chains. In terms of tissue distribution, red blood cells.

The protein is Hemoglobin subunit delta (HBD) of Ateles fusciceps (Brown-headed spider monkey).